Here is a 109-residue protein sequence, read N- to C-terminus: V-type proton ATPase 16 kDa proteolipid subunit (109 aa).

The helical transmembrane segment at 1 to 20 (VPVVMAGVLGIYGLIIAVII) threads the bilayer. Residues 21–39 (STGINPKAKPYYLFDGYAH) lie on the Lumenal side of the membrane. Residues 40–61 (LSSGLACGLAGLAAGMAIGIVG) traverse the membrane as a helical segment. Residues 62-73 (DAGVRANAQQPK) lie on the Cytoplasmic side of the membrane. A helical membrane pass occupies residues 74 to 99 (LFVGMILILIFAEALALYGLIVGIIL). Over 100–109 (SSRAGQSRAD) the chain is Lumenal.

The protein belongs to the V-ATPase proteolipid subunit family. As to quaternary structure, V-ATPase is a heteromultimeric enzyme composed of a peripheral catalytic V1 complex (main components: subunits A, B, C, D, E, and F) attached to an integral membrane V0 proton pore complex (main component: the proteolipid protein; which is present as a hexamer that forms the proton-conducting pore). As to expression, high expression in the mesocotyl tip of etiolated seedlings compared to the base.

It localises to the vacuole membrane. Functionally, proton-conducting pore forming subunit of the membrane integral V0 complex of vacuolar ATPase. V-ATPase is responsible for acidifying a variety of intracellular compartments in eukaryotic cells. The polypeptide is V-type proton ATPase 16 kDa proteolipid subunit (Zea mays (Maize)).